The following is a 191-amino-acid chain: Cdc42 homolog (191 aa).

Gly10 to Thr17 contributes to the GTP binding site. The short motif at Tyr32–Tyr40 is the Effector region element. GTP contacts are provided by residues Asp57–Gln61 and Thr115–Asp118. Cys188 carries the post-translational modification Cysteine methyl ester. Cys188 is lipidated: S-geranylgeranyl cysteine. The propeptide at Lys189 to Leu191 is removed in mature form.

Belongs to the small GTPase superfamily. Rho family. CDC42 subfamily.

It is found in the cell junction. The protein localises to the adherens junction. The protein resides in the cell membrane. In terms of biological role, regulates mbt kinase activity and is also required to recruit mbt to adherens junctions. Together with mbt, regulates photoreceptor cell morphogenesis. The polypeptide is Cdc42 homolog (Aedes aegypti (Yellowfever mosquito)).